A 342-amino-acid polypeptide reads, in one-letter code: N-acetyl-gamma-glutamyl-phosphate reductase (342 aa).

C146 is an active-site residue.

It belongs to the NAGSA dehydrogenase family. Type 1 subfamily.

The protein localises to the cytoplasm. The catalysed reaction is N-acetyl-L-glutamate 5-semialdehyde + phosphate + NADP(+) = N-acetyl-L-glutamyl 5-phosphate + NADPH + H(+). It functions in the pathway amino-acid biosynthesis; L-arginine biosynthesis; N(2)-acetyl-L-ornithine from L-glutamate: step 3/4. In terms of biological role, catalyzes the NADPH-dependent reduction of N-acetyl-5-glutamyl phosphate to yield N-acetyl-L-glutamate 5-semialdehyde. In Streptomyces coelicolor (strain ATCC BAA-471 / A3(2) / M145), this protein is N-acetyl-gamma-glutamyl-phosphate reductase.